A 446-amino-acid polypeptide reads, in one-letter code: Chromosomal replication initiator protein DnaA (446 aa).

Residues 1 to 72 are domain I, interacts with DnaA modulators; the sequence is MENILDLWNQ…ADTIYELTGE (72 aa). The tract at residues 72-109 is domain II; the sequence is EELSVKFVIPQNQDEENFLPKPQVKKAAKEEPSDFPQS. The domain III, AAA+ region stretch occupies residues 110 to 326; the sequence is MLNPKYTFDT…GALIRVVAYS (217 aa). The ATP site is built by Gly-154, Gly-156, Lys-157, and Thr-158. Residues 327-446 are domain IV, binds dsDNA; it reads SLINKDINAD…QVKEIKELLK (120 aa).

This sequence belongs to the DnaA family. In terms of assembly, oligomerizes as a right-handed, spiral filament on DNA at oriC.

It is found in the cytoplasm. In terms of biological role, plays an essential role in the initiation and regulation of chromosomal replication. ATP-DnaA binds to the origin of replication (oriC) to initiate formation of the DNA replication initiation complex once per cell cycle. Binds the DnaA box (a 9 base pair repeat at the origin) and separates the double-stranded (ds)DNA. Forms a right-handed helical filament on oriC DNA; dsDNA binds to the exterior of the filament while single-stranded (ss)DNA is stabiized in the filament's interior. The ATP-DnaA-oriC complex binds and stabilizes one strand of the AT-rich DNA unwinding element (DUE), permitting loading of DNA polymerase. After initiation quickly degrades to an ADP-DnaA complex that is not apt for DNA replication. Binds acidic phospholipids. This chain is Chromosomal replication initiator protein DnaA, found in Bacillus velezensis (strain DSM 23117 / BGSC 10A6 / LMG 26770 / FZB42) (Bacillus amyloliquefaciens subsp. plantarum).